The chain runs to 262 residues: ABSCISIC ACID-INSENSITIVE 5-like protein 3 (262 aa).

Phosphoserine occurs at positions 21, 43, and 66. At T104 the chain carries Phosphothreonine. Positions 190-253 constitute a bZIP domain; the sequence is VERRQKRMIK…SEPPPDPKWK (64 aa). Residues 192 to 211 form a basic motif region; that stretch reads RRQKRMIKNRESAARSRARK. The tract at residues 218 to 232 is leucine-zipper; sequence LEIKVSRLEEENEKL. A compositionally biased stretch (basic and acidic residues) spans 239–252; that stretch reads EKILPSEPPPDPKW. The segment at 239–262 is disordered; the sequence is EKILPSEPPPDPKWKLRRTNSASL.

This sequence belongs to the bZIP family. ABI5 subfamily. DNA-binding heterodimer with ABI5/DPBF1, DPBF2 or AREB3/DPBF3. Interacts with the AFP proteins AFP2, AFP3 and AFP4. In terms of tissue distribution, predominantly expressed in seeds.

It localises to the nucleus. Its function is as follows. Binds to the embryo specification element and the ABA-responsive element (ABRE) of the Dc3 gene promoter and to the ABRE of the Em1 gene promoter. Could participate in abscisic acid-regulated gene expression during seed development. This is ABSCISIC ACID-INSENSITIVE 5-like protein 3 (DPBF4) from Arabidopsis thaliana (Mouse-ear cress).